The sequence spans 183 residues: Large ribosomal subunit protein bL27m (183 aa).

A mitochondrion-targeting transit peptide spans 1–34 (MFLRPTSIPSAVSQIRAQLFAGPSSLASQIQVRW).

This sequence belongs to the bacterial ribosomal protein bL27 family.

It is found in the mitochondrion. In Cryptococcus neoformans var. neoformans serotype D (strain B-3501A) (Filobasidiella neoformans), this protein is Large ribosomal subunit protein bL27m (RPL27).